A 385-amino-acid polypeptide reads, in one-letter code: Probable tRNA sulfurtransferase (385 aa).

Residues 57–160 enclose the THUMP domain; it reads DGVIERVKKV…RGNAYVFTDK (104 aa). Residues 180–181, 205–206, Arg262, Gly284, and Gln293 contribute to the ATP site; these read ML and YY.

The protein belongs to the ThiI family.

Its subcellular location is the cytoplasm. The catalysed reaction is [ThiI sulfur-carrier protein]-S-sulfanyl-L-cysteine + a uridine in tRNA + 2 reduced [2Fe-2S]-[ferredoxin] + ATP + H(+) = [ThiI sulfur-carrier protein]-L-cysteine + a 4-thiouridine in tRNA + 2 oxidized [2Fe-2S]-[ferredoxin] + AMP + diphosphate. The enzyme catalyses [ThiS sulfur-carrier protein]-C-terminal Gly-Gly-AMP + S-sulfanyl-L-cysteinyl-[cysteine desulfurase] + AH2 = [ThiS sulfur-carrier protein]-C-terminal-Gly-aminoethanethioate + L-cysteinyl-[cysteine desulfurase] + A + AMP + 2 H(+). It participates in cofactor biosynthesis; thiamine diphosphate biosynthesis. In terms of biological role, catalyzes the ATP-dependent transfer of a sulfur to tRNA to produce 4-thiouridine in position 8 of tRNAs, which functions as a near-UV photosensor. Also catalyzes the transfer of sulfur to the sulfur carrier protein ThiS, forming ThiS-thiocarboxylate. This is a step in the synthesis of thiazole, in the thiamine biosynthesis pathway. The sulfur is donated as persulfide by IscS. The polypeptide is Probable tRNA sulfurtransferase (Clostridium perfringens (strain ATCC 13124 / DSM 756 / JCM 1290 / NCIMB 6125 / NCTC 8237 / Type A)).